The following is a 68-amino-acid chain: Peptide Hp1412 (68 aa).

The signal sequence occupies residues 1-23; sequence MKTHFAIFLITLFLFQMFSQSDA. A Cysteine amide modification is found at Cys-36. A propeptide spanning residues 40-68 is cleaved from the precursor; it reads GLSDLYDLDEMFDGEISQADIDFLKELMR.

The protein belongs to the non-disulfide-bridged peptide (NDBP) superfamily. Short antimicrobial peptide (group 4) family. Expressed by the venom gland.

The protein resides in the secreted. It is found in the target cell membrane. In terms of biological role, amphipathic peptide with antimicrobial activity. The protein is Peptide Hp1412 of Heterometrus petersii (Asian forest scorpion).